The sequence spans 1646 residues: Monensin-resistant homolog 2 (1646 aa).

The protein belongs to the MON2 family.

The protein resides in the golgi apparatus. Functionally, may be required for traffic between late Golgi and early endosomes. The sequence is that of Monensin-resistant homolog 2 (mon-2) from Caenorhabditis elegans.